A 163-amino-acid polypeptide reads, in one-letter code: Large ribosomal subunit protein eL24y (163 aa).

The span at 119-133 (IKKTKDEKKAKKVEF) shows a compositional bias: basic and acidic residues. Residues 119-163 (IKKTKDEKKAKKVEFASKQQKVKANFPKAAAASKGPKVGGGGGKR) are disordered.

It belongs to the eukaryotic ribosomal protein eL24 family. Interacts with REIL1 and REIL2. Component of the large ribosomal subunit. Ubiquitous.

It localises to the cytoplasm. The protein resides in the nucleus. Its subcellular location is the nucleolus. The protein localises to the nucleoplasm. In terms of biological role, might have an extraribosomal function in reinitiation of translation of ETTIN and MONOPTEROS genes that are involved in the auxin-mediated gynoecium patterning. Essential in leaf polarity establishment, probably having a role for translation in leaf dorsoventral patterning to specify leaf adaxial identity. This is Large ribosomal subunit protein eL24y from Arabidopsis thaliana (Mouse-ear cress).